The chain runs to 186 residues: Ribonuclease M5 (186 aa).

The Toprim domain maps to S6–P89. Mg(2+)-binding residues include E12, D58, and D60.

The protein belongs to the ribonuclease M5 family. Requires Mg(2+) as cofactor.

It localises to the cytoplasm. The enzyme catalyses Endonucleolytic cleavage of RNA, removing 21 and 42 nucleotides, respectively, from the 5'- and 3'-termini of a 5S-rRNA precursor.. Functionally, required for correct processing of both the 5' and 3' ends of 5S rRNA precursor. Cleaves both sides of a double-stranded region yielding mature 5S rRNA in one step. This Streptococcus pneumoniae (strain ATCC BAA-255 / R6) protein is Ribonuclease M5.